Consider the following 688-residue polypeptide: Eukaryotic translation initiation factor 3 subunit B (688 aa).

The segment at 1-43 is disordered; that stretch reads MLESERPERDMEEEGEESNEEEEEEGMSFSDPEGFEDDISDEE. Composition is skewed to acidic residues over residues 10-26 and 33-43; these read DMEEEGEESNEEEEEEG and EGFEDDISDEE. The RRM domain occupies 61-144; the sequence is SVIVVDNVPQ…HTFRVNLFTD (84 aa). 8 WD repeats span residues 164–206, 208–246, 248–293, 297–335, 338–373, 436–492, 525–570, and 635–680; these read KDFG…VPVE, RARWTETYVRWSPKGTYLATFHQRGIALWGGEKFKQIQR, SHQG…NKRG, ESSAHWPIFKWSHDGKFFARMTLDTLSIYETPSMGLLDK, LKITGIKDFSWSPGGNIIAFWVPEDKDIPARVTLMQ, EMKD…TIFW, AEHY…LQKN, and TYRE…FFVT. Residues 589-640 adopt a coiled-coil conformation; sequence SQDQIKQIKKDLKKYSKIFEQKDRLSQTKASKELIERRRAMMEEYKTYREMA.

Belongs to the eIF-3 subunit B family. In terms of assembly, component of the eukaryotic translation initiation factor 3 (eIF-3) complex, which is composed of 13 subunits: eif3a, eif3b, eif3c, eif3d, eif3e, eif3f, eif3g, eif3h, eif3i, eif3j, eif3k, eif3l and eif3m.

It is found in the cytoplasm. The protein localises to the stress granule. Functionally, RNA-binding component of the eukaryotic translation initiation factor 3 (eIF-3) complex, which is involved in protein synthesis of a specialized repertoire of mRNAs and, together with other initiation factors, stimulates binding of mRNA and methionyl-tRNAi to the 40S ribosome. The eIF-3 complex specifically targets and initiates translation of a subset of mRNAs involved in cell proliferation. The chain is Eukaryotic translation initiation factor 3 subunit B (eif3b) from Xenopus laevis (African clawed frog).